A 154-amino-acid polypeptide reads, in one-letter code: SKP1-like protein 13 (154 aa).

The interaction with the F-box domain of F-box proteins stretch occupies residues 96-154 (MLAANYLNIKDLLDLGCQTVADMITGKKPDEIRALLGIENDFTPEEEEEIRKENQWAFE).

Belongs to the SKP1 family. Part of a SCF (SKP1-cullin-F-box) protein ligase complex. Interacts with ADO3/FKF1, EBF1, PP2A13, SKIP15, SKIP16, CPR1/CPR30, At1g55000, At3g61590, At1g67340, At1g78100, At3g04660, At4g38940, At4g39550 and At5g49610. Mostly expressed in inflorescences, and, to a lower extent, in seedlings and siliques. Also detected in cotyledons, leaves, pollen and seeds.

The protein localises to the nucleus. Its pathway is protein modification; protein ubiquitination. In terms of biological role, involved in ubiquitination and subsequent proteasomal degradation of target proteins. Together with CUL1, RBX1 and a F-box protein, it forms a SCF E3 ubiquitin ligase complex. The functional specificity of this complex depends on the type of F-box protein. In the SCF complex, it serves as an adapter that links the F-box protein to CUL1. This is SKP1-like protein 13 (ASK13) from Arabidopsis thaliana (Mouse-ear cress).